We begin with the raw amino-acid sequence, 91 residues long: Peptide Ctry2146 (91 aa).

Positions 1 to 23 (MKTQTLLVTFLVVLLMVATQTEA) are cleaved as a signal peptide. L33 is subject to Leucine amide. A propeptide spanning residues 37–91 (GLLDGLLGKRGLLFGKRGPLFGKRALTNQDFLDFAYDPSLSAADMDALEMLFEDY) is cleaved from the precursor.

Belongs to the non-disulfide-bridged peptide (NDBP) superfamily. Short antimicrobial peptide (group 4) family. Expressed by the venom gland.

It localises to the secreted. It is found in the target cell membrane. In terms of biological role, antimicrobial peptide. The polypeptide is Peptide Ctry2146 (Chaerilus tryznai (Scorpion)).